Reading from the N-terminus, the 117-residue chain is Large ribosomal subunit protein bL20 (117 aa).

It belongs to the bacterial ribosomal protein bL20 family.

Binds directly to 23S ribosomal RNA and is necessary for the in vitro assembly process of the 50S ribosomal subunit. It is not involved in the protein synthesizing functions of that subunit. This Rickettsia akari (strain Hartford) protein is Large ribosomal subunit protein bL20.